Here is a 767-residue protein sequence, read N- to C-terminus: Probable ubiquitin carboxyl-terminal hydrolase creB (767 aa).

In terms of domain architecture, USP spans 49 to 462 (YGMENYGNTC…CAYVLFYQET (414 aa)). The Nucleophile role is filled by cysteine 58. 2 disordered regions span residues 107–140 (EAEA…DSPE) and 232–263 (ASKQ…KTPN). A compositionally biased stretch (polar residues) spans 250–263 (SVDQSSSTGSKTPN). Histidine 413 functions as the Proton acceptor in the catalytic mechanism. The interval 490-767 (LKQNGFPQSP…LRKKSFSILS (278 aa)) is disordered. Composition is skewed to low complexity over residues 540–554 (ESAP…SPLS) and 564–573 (ERVTTVATPP). Residues 574-641 (KNDALAKKER…ASKAEEDRRL (68 aa)) are a coiled coil. Positions 577–650 (ALAKKERARE…LSHENGKEKQ (74 aa)) are enriched in basic and acidic residues. The segment covering 656–667 (RLKRGSKSLSHR) has biased composition (basic residues). The span at 690 to 700 (STLSQTGPTSE) shows a compositional bias: polar residues. A compositionally biased stretch (low complexity) spans 701–713 (QQQQQQQQQQQQQ). A compositionally biased stretch (basic and acidic residues) spans 731–749 (TIREDEQVNHKDSKHERTG). Residues 750 to 767 (HGKWRSFSLRKKSFSILS) show a composition bias toward basic residues.

The protein belongs to the peptidase C19 family. As to quaternary structure, interacts with creA, creC and qutD.

It catalyses the reaction Thiol-dependent hydrolysis of ester, thioester, amide, peptide and isopeptide bonds formed by the C-terminal Gly of ubiquitin (a 76-residue protein attached to proteins as an intracellular targeting signal).. In terms of biological role, ubiquitin thioesterase component of the regulatory network controlling carbon source utilization through ubiquitination and deubiquitination involving creA, creB, creC, creD and acrB. Deubiquitinates the creA catabolic repressor and the quinate permease qutD. Also plays a role in response to carbon starvation and the control of extracellular proteases activity. The chain is Probable ubiquitin carboxyl-terminal hydrolase creB (creB) from Aspergillus fumigatus (strain CBS 144.89 / FGSC A1163 / CEA10) (Neosartorya fumigata).